Reading from the N-terminus, the 60-residue chain is Metallothionein-like protein EMB30 (60 aa).

It belongs to the metallothionein superfamily. Type 15 family.

In terms of biological role, metallothioneins have a high content of cysteine residues that bind various heavy metals. This chain is Metallothionein-like protein EMB30 (EMB30), found in Picea glauca (White spruce).